Consider the following 103-residue polypeptide: Gene 56 protein (103 aa).

Residues 9 to 103 (WDGAHVRTLF…DYYTASETGL (95 aa)) enclose the Glutaredoxin domain.

This chain is Gene 56 protein (56), found in Mycobacterium phage L5 (Mycobacteriophage L5).